The chain runs to 359 residues: Ferredoxin--NADP reductase (359 aa).

Positions 48, 56, 61, 101, 139, 304, and 345 each coordinate FAD. Positions 340–359 are disordered; that stretch reads VHTHTSNDTNLQSRLHAAAE. Over residues 341-352 the composition is skewed to polar residues; sequence HTHTSNDTNLQS.

It belongs to the ferredoxin--NADP reductase type 2 family. Homodimer. The cofactor is FAD.

It carries out the reaction 2 reduced [2Fe-2S]-[ferredoxin] + NADP(+) + H(+) = 2 oxidized [2Fe-2S]-[ferredoxin] + NADPH. The sequence is that of Ferredoxin--NADP reductase from Ralstonia nicotianae (strain ATCC BAA-1114 / GMI1000) (Ralstonia solanacearum).